We begin with the raw amino-acid sequence, 339 residues long: Ketol-acid reductoisomerase (NADP(+)) (339 aa).

The KARI N-terminal Rossmann domain occupies 1-182 (MRVYYDRDAD…GGGRSGVIET (182 aa)). NADP(+) is bound by residues 24-27 (YGSQ), Arg48, Ser51, Thr53, and 83-86 (DELQ). Residue His108 is part of the active site. Gly134 contacts NADP(+). A KARI C-terminal knotted domain is found at 183-328 (TFKEECETDL…GKLRAMMPWI (146 aa)). Mg(2+)-binding residues include Asp191, Glu195, Glu227, and Glu231. Ser252 provides a ligand contact to substrate.

Belongs to the ketol-acid reductoisomerase family. Requires Mg(2+) as cofactor.

The catalysed reaction is (2R)-2,3-dihydroxy-3-methylbutanoate + NADP(+) = (2S)-2-acetolactate + NADPH + H(+). The enzyme catalyses (2R,3R)-2,3-dihydroxy-3-methylpentanoate + NADP(+) = (S)-2-ethyl-2-hydroxy-3-oxobutanoate + NADPH + H(+). It functions in the pathway amino-acid biosynthesis; L-isoleucine biosynthesis; L-isoleucine from 2-oxobutanoate: step 2/4. Its pathway is amino-acid biosynthesis; L-valine biosynthesis; L-valine from pyruvate: step 2/4. Its function is as follows. Involved in the biosynthesis of branched-chain amino acids (BCAA). Catalyzes an alkyl-migration followed by a ketol-acid reduction of (S)-2-acetolactate (S2AL) to yield (R)-2,3-dihydroxy-isovalerate. In the isomerase reaction, S2AL is rearranged via a Mg-dependent methyl migration to produce 3-hydroxy-3-methyl-2-ketobutyrate (HMKB). In the reductase reaction, this 2-ketoacid undergoes a metal-dependent reduction by NADPH to yield (R)-2,3-dihydroxy-isovalerate. This Brucella suis (strain ATCC 23445 / NCTC 10510) protein is Ketol-acid reductoisomerase (NADP(+)).